Reading from the N-terminus, the 353-residue chain is Putative protein SPATA31J1 (353 aa).

The chain crosses the membrane as a helical span at residues 34-54 (IPQIIHFVLFVVFSLVILIIL). The tract at residues 122 to 271 (EGSSHHLPRQ…NPGWVSWSDS (150 aa)) is disordered. Residues 182 to 195 (SVESLGSPSSLSSS) are compositionally biased toward low complexity. Positions 211–221 (PPASTLSPNPT) are enriched in polar residues. Residues 222–237 (SSTESLGYLSSLSSSQ) show a composition bias toward low complexity. Residues 244–262 (PLKHPSHKPRGRSLPRRRN) show a composition bias toward basic residues.

This sequence belongs to the SPATA31 family.

The protein localises to the membrane. This Homo sapiens (Human) protein is Putative protein SPATA31J1.